The primary structure comprises 630 residues: 1-deoxy-D-xylulose-5-phosphate synthase (630 aa).

Thiamine diphosphate-binding positions include His-87 and 128–130; that span reads GHS. A Mg(2+)-binding site is contributed by Asp-159. Thiamine diphosphate contacts are provided by residues 160 to 161, Asn-188, Phe-295, and Glu-377; that span reads GA. Residue Asn-188 participates in Mg(2+) binding.

It belongs to the transketolase family. DXPS subfamily. As to quaternary structure, homodimer. Mg(2+) is required as a cofactor. It depends on thiamine diphosphate as a cofactor.

The catalysed reaction is D-glyceraldehyde 3-phosphate + pyruvate + H(+) = 1-deoxy-D-xylulose 5-phosphate + CO2. It participates in metabolic intermediate biosynthesis; 1-deoxy-D-xylulose 5-phosphate biosynthesis; 1-deoxy-D-xylulose 5-phosphate from D-glyceraldehyde 3-phosphate and pyruvate: step 1/1. Its function is as follows. Catalyzes the acyloin condensation reaction between C atoms 2 and 3 of pyruvate and glyceraldehyde 3-phosphate to yield 1-deoxy-D-xylulose-5-phosphate (DXP). The protein is 1-deoxy-D-xylulose-5-phosphate synthase of Pseudomonas savastanoi pv. phaseolicola (strain 1448A / Race 6) (Pseudomonas syringae pv. phaseolicola (strain 1448A / Race 6)).